The following is a 242-amino-acid chain: Biosynthetic peptidoglycan transglycosylase (242 aa).

The chain crosses the membrane as a helical span at residues 19–39 (LMVVLAVFWGGGIALFSVAPV).

The protein belongs to the glycosyltransferase 51 family.

It localises to the cell inner membrane. It catalyses the reaction [GlcNAc-(1-&gt;4)-Mur2Ac(oyl-L-Ala-gamma-D-Glu-L-Lys-D-Ala-D-Ala)](n)-di-trans,octa-cis-undecaprenyl diphosphate + beta-D-GlcNAc-(1-&gt;4)-Mur2Ac(oyl-L-Ala-gamma-D-Glu-L-Lys-D-Ala-D-Ala)-di-trans,octa-cis-undecaprenyl diphosphate = [GlcNAc-(1-&gt;4)-Mur2Ac(oyl-L-Ala-gamma-D-Glu-L-Lys-D-Ala-D-Ala)](n+1)-di-trans,octa-cis-undecaprenyl diphosphate + di-trans,octa-cis-undecaprenyl diphosphate + H(+). Its pathway is cell wall biogenesis; peptidoglycan biosynthesis. Its function is as follows. Peptidoglycan polymerase that catalyzes glycan chain elongation from lipid-linked precursors. This Escherichia coli O139:H28 (strain E24377A / ETEC) protein is Biosynthetic peptidoglycan transglycosylase.